A 177-amino-acid chain; its full sequence is Large ribosomal subunit protein uL6 (177 aa).

Residue Lys-44 is modified to N6-acetyllysine.

The protein belongs to the universal ribosomal protein uL6 family. In terms of assembly, part of the 50S ribosomal subunit.

Its function is as follows. This protein binds to the 23S rRNA, and is important in its secondary structure. It is located near the subunit interface in the base of the L7/L12 stalk, and near the tRNA binding site of the peptidyltransferase center. This is Large ribosomal subunit protein uL6 from Escherichia fergusonii (strain ATCC 35469 / DSM 13698 / CCUG 18766 / IAM 14443 / JCM 21226 / LMG 7866 / NBRC 102419 / NCTC 12128 / CDC 0568-73).